We begin with the raw amino-acid sequence, 439 residues long: Ribosomal protein uS12 methylthiotransferase RimO (439 aa).

An MTTase N-terminal domain is found at K7 to N119. Residues C16, C50, C82, C151, C155, and C158 each contribute to the [4Fe-4S] cluster site. Positions T137–K368 constitute a Radical SAM core domain.

It belongs to the methylthiotransferase family. RimO subfamily. Requires [4Fe-4S] cluster as cofactor.

It is found in the cytoplasm. It catalyses the reaction L-aspartate(89)-[ribosomal protein uS12]-hydrogen + (sulfur carrier)-SH + AH2 + 2 S-adenosyl-L-methionine = 3-methylsulfanyl-L-aspartate(89)-[ribosomal protein uS12]-hydrogen + (sulfur carrier)-H + 5'-deoxyadenosine + L-methionine + A + S-adenosyl-L-homocysteine + 2 H(+). In terms of biological role, catalyzes the methylthiolation of an aspartic acid residue of ribosomal protein uS12. The polypeptide is Ribosomal protein uS12 methylthiotransferase RimO (Helicobacter pylori (strain ATCC 700392 / 26695) (Campylobacter pylori)).